Reading from the N-terminus, the 349-residue chain is Dihydroorotate dehydrogenase (quinone) (349 aa).

FMN-binding positions include 67-71 (AGLDK) and threonine 91. Position 71 (lysine 71) interacts with substrate. Residue 116-120 (NRLGF) coordinates substrate. Positions 147 and 180 each coordinate FMN. Position 180 (asparagine 180) interacts with substrate. The active-site Nucleophile is the serine 183. Substrate is bound at residue asparagine 185. FMN-binding residues include lysine 225 and threonine 253. Residue 254-255 (NT) coordinates substrate. Residues glycine 276, glycine 305, and 326–327 (YT) each bind FMN.

This sequence belongs to the dihydroorotate dehydrogenase family. Type 2 subfamily. As to quaternary structure, monomer. FMN serves as cofactor.

The protein resides in the cell membrane. It carries out the reaction (S)-dihydroorotate + a quinone = orotate + a quinol. The protein operates within pyrimidine metabolism; UMP biosynthesis via de novo pathway; orotate from (S)-dihydroorotate (quinone route): step 1/1. Functionally, catalyzes the conversion of dihydroorotate to orotate with quinone as electron acceptor. This is Dihydroorotate dehydrogenase (quinone) from Bordetella avium (strain 197N).